The primary structure comprises 290 residues: MNFIIATRRSKLAQVQTEIIIDLLNKKHDIECEKLLIETVGDKILEVSLDKIGGKGLFVKDIEVAMLEQRADAAVHSMKDVPYEMPKGFEIIAIPKREDVRDAFISLDNIKFKDLRKGAKIGTSSRRRAAQLKLLRPDLDIVPIRGNVQTRIEKIKKENLDGIILAVAGLKRVNLEHLITDYFDTKEMVPAIGQGALGIEVMEEHPKKELFKDLDHYNSKICVLAERAFMRELDGDCHSTIGAYASIKDNIMHIIGIFERKNKIIKKEITGTKDQYEKLGIALAEHILKD.

The residue at position 237 (C237) is an S-(dipyrrolylmethanemethyl)cysteine.

Belongs to the HMBS family. In terms of assembly, monomer. Dipyrromethane is required as a cofactor.

It catalyses the reaction 4 porphobilinogen + H2O = hydroxymethylbilane + 4 NH4(+). It functions in the pathway porphyrin-containing compound metabolism; protoporphyrin-IX biosynthesis; coproporphyrinogen-III from 5-aminolevulinate: step 2/4. Its function is as follows. Tetrapolymerization of the monopyrrole PBG into the hydroxymethylbilane pre-uroporphyrinogen in several discrete steps. This Clostridium botulinum (strain Langeland / NCTC 10281 / Type F) protein is Porphobilinogen deaminase.